Here is a 2166-residue protein sequence, read N- to C-terminus: Protein TIC236, chloroplastic (2166 aa).

The N-terminal 37 residues, 1 to 37 (MSLRLQNPFLSTPLLHGSFNRREKRINVARRAFRSKR), are a transit peptide targeting the chloroplast. Over 38–101 (IYSEKKQNDW…RSLAPVWEEG (64 aa)) the chain is Stromal. Residues 102–122 (LFFLRCSVFFAVISGVCLLVW) form a helical membrane-spanning segment. The Chloroplast intermembrane segment spans residues 123–2166 (YGQNKARVFV…LFEYSATSQD (2044 aa)). The disordered stretch occupies residues 1611–1649 (MSEGEVSETDRGGAVKIPSWAKEKEDDEKRTSRDRSEER). The span at 1631–1649 (AKEKEDDEKRTSRDRSEER) shows a compositional bias: basic and acidic residues.

Belongs to the TamB family. Part of the TIC complex, which can interact with components of the TOC complex to form a larger import complex. Interacts with the TOC complex component TOC75-3.

Its subcellular location is the plastid. The protein localises to the chloroplast inner membrane. It is found in the chloroplast intermembrane space. Its function is as follows. Part of the inner chloroplast membrane translocon complex (TIC) which associates with the outer chloroplast membrane translocon complex (TOC) and forms a supercomplex involved in protein precursor import into the chloroplast stroma. Required for the import of HSP93, TIC40 and RBCS protein precursors in the chloroplast stroma. Links the outer and inner membrane translocons of the chloroplast envelope. The sequence is that of Protein TIC236, chloroplastic from Arabidopsis thaliana (Mouse-ear cress).